The primary structure comprises 186 residues: 3-hydroxyanthranilate 3,4-dioxygenase (186 aa).

Position 44 (R44) interacts with O2. Residues H48, E54, and H96 each contribute to the Fe cation site. E54 is a binding site for substrate. Substrate is bound by residues R100 and E110. A divalent metal cation-binding residues include C125, C130, C164, and C167.

Belongs to the 3-HAO family. Fe(2+) serves as cofactor.

Its subcellular location is the cytoplasm. The enzyme catalyses 3-hydroxyanthranilate + O2 = (2Z,4Z)-2-amino-3-carboxymuconate 6-semialdehyde. It participates in cofactor biosynthesis; NAD(+) biosynthesis; quinolinate from L-kynurenine: step 3/3. Catalyzes the oxidative ring opening of 3-hydroxyanthranilate to 2-amino-3-carboxymuconate semialdehyde, which spontaneously cyclizes to quinolinate. The polypeptide is 3-hydroxyanthranilate 3,4-dioxygenase (Chaetomium globosum (strain ATCC 6205 / CBS 148.51 / DSM 1962 / NBRC 6347 / NRRL 1970) (Soil fungus)).